Reading from the N-terminus, the 112-residue chain is Ribonuclease VapC8 (112 aa).

The region spanning 10 to 109 (LLDTSVFIAR…TDALIAATAE (100 aa)) is the PINc domain. The Mg(2+) site is built by Asp-12 and Asp-101.

It belongs to the PINc/VapC protein family. It depends on Mg(2+) as a cofactor.

In terms of biological role, toxic component of a type II toxin-antitoxin (TA) system. An RNase. The cognate antitoxin is VapB8. This Mycobacterium tuberculosis (strain CDC 1551 / Oshkosh) protein is Ribonuclease VapC8 (vapC8).